The following is a 405-amino-acid chain: Nicotinate phosphoribosyltransferase (405 aa).

Position 230 is a phosphohistidine; by autocatalysis (histidine 230).

This sequence belongs to the NAPRTase family. Post-translationally, transiently phosphorylated on a His residue during the reaction cycle. Phosphorylation strongly increases the affinity for substrates and increases the rate of nicotinate D-ribonucleotide production. Dephosphorylation regenerates the low-affinity form of the enzyme, leading to product release.

It catalyses the reaction nicotinate + 5-phospho-alpha-D-ribose 1-diphosphate + ATP + H2O = nicotinate beta-D-ribonucleotide + ADP + phosphate + diphosphate. Its pathway is cofactor biosynthesis; NAD(+) biosynthesis; nicotinate D-ribonucleotide from nicotinate: step 1/1. Functionally, catalyzes the synthesis of beta-nicotinate D-ribonucleotide from nicotinate and 5-phospho-D-ribose 1-phosphate at the expense of ATP. This Bordetella bronchiseptica (strain ATCC BAA-588 / NCTC 13252 / RB50) (Alcaligenes bronchisepticus) protein is Nicotinate phosphoribosyltransferase.